Reading from the N-terminus, the 688-residue chain is Phosphoinositide 3-phosphatase (688 aa).

Positions 155 to 637 (SWDIYDPIKE…KKVQWWWQLY (483 aa)) constitute a Myotubularin phosphatase domain. The active-site Phosphocysteine intermediate is cysteine 397. The span at 647–668 (ELRHKRDSVPISVDKKSKEHSN) shows a compositional bias: basic and acidic residues. Residues 647–672 (ELRHKRDSVPISVDKKSKEHSNSDGG) form a disordered region.

Belongs to the protein-tyrosine phosphatase family. Non-receptor class myotubularin subfamily.

It localises to the cytoplasm. The catalysed reaction is a 1,2-diacyl-sn-glycero-3-phospho-(1D-myo-inositol-3-phosphate) + H2O = a 1,2-diacyl-sn-glycero-3-phospho-(1D-myo-inositol) + phosphate. In terms of biological role, lipid phosphatase which dephosphorylates phosphatidylinositol 3-monophosphate (PI3P). Involved in the control of PI3P-dependent signaling and in the maintenance of endosomal system integrity. The protein is Phosphoinositide 3-phosphatase of Saccharomyces cerevisiae (strain ATCC 204508 / S288c) (Baker's yeast).